The following is a 436-amino-acid chain: Fasciclin-like arabinogalactan protein 15 (436 aa).

Residues 1–20 (MDDLSKLLFFLLLTISITTA) form the signal peptide. FAS1 domains lie at 31–165 (NSNS…ERLL) and 249–392 (VKDF…DGVL). N-linked (GlcNAc...) asparagine glycans are attached at residues N68 and N271.

The protein belongs to the fasciclin-like AGP family.

It localises to the secreted. May be a cell surface adhesion protein. The sequence is that of Fasciclin-like arabinogalactan protein 15 (FLA15) from Arabidopsis thaliana (Mouse-ear cress).